Here is a 433-residue protein sequence, read N- to C-terminus: Glutamate-1-semialdehyde 2,1-aminomutase (433 aa).

At Lys265 the chain carries N6-(pyridoxal phosphate)lysine.

It belongs to the class-III pyridoxal-phosphate-dependent aminotransferase family. HemL subfamily. In terms of assembly, homodimer. Pyridoxal 5'-phosphate is required as a cofactor.

It localises to the cytoplasm. The catalysed reaction is (S)-4-amino-5-oxopentanoate = 5-aminolevulinate. The protein operates within porphyrin-containing compound metabolism; protoporphyrin-IX biosynthesis; 5-aminolevulinate from L-glutamyl-tRNA(Glu): step 2/2. The chain is Glutamate-1-semialdehyde 2,1-aminomutase from Shewanella denitrificans (strain OS217 / ATCC BAA-1090 / DSM 15013).